Reading from the N-terminus, the 202-residue chain is Probable nicotinate-nucleotide adenylyltransferase (202 aa).

It belongs to the NadD family.

The catalysed reaction is nicotinate beta-D-ribonucleotide + ATP + H(+) = deamido-NAD(+) + diphosphate. It functions in the pathway cofactor biosynthesis; NAD(+) biosynthesis; deamido-NAD(+) from nicotinate D-ribonucleotide: step 1/1. In terms of biological role, catalyzes the reversible adenylation of nicotinate mononucleotide (NaMN) to nicotinic acid adenine dinucleotide (NaAD). In Bacteroides thetaiotaomicron (strain ATCC 29148 / DSM 2079 / JCM 5827 / CCUG 10774 / NCTC 10582 / VPI-5482 / E50), this protein is Probable nicotinate-nucleotide adenylyltransferase.